Reading from the N-terminus, the 359-residue chain is Methyltransferase fsa4 (359 aa).

Residues G198–G199, D224, S248–F249, R264, and R265 each bind S-adenosyl-L-methionine.

The protein belongs to the class I-like SAM-binding methyltransferase superfamily. Cation-independent O-methyltransferase family.

It participates in mycotoxin biosynthesis. Functionally, methyltransferase; part of the gene cluster that mediates the biosynthesis of HIV-1 integrase inhibitor equisetin and of fusarisetin A, both trans-fused decalin-containing tetramic acids showing also antimicrobial activity. The PKS module of fsa1 together with the enoylreductase fsa3 catalyze the formation of the polyketide unit which is then conjugated to L-serine by the condensation domain of the fsa1 NRPS module. Activity of the Dieckmann cyclase domain (RED) results in release of the Dieckmann product intermediate. Diels-Alderase fsa2 is involved in endo-selective Diels-Alder cycloaddition to form the decalin ring, leading to the production of N-desmethylequisetin also called trichosetin. Subsequent N-methylation is carried out by fsa4 to give equisetin. The enzymatic gene responsible for the conversion of equisetin to fusarisetin A has not been identified yet and is probably located outside of the fsa cluster. This chain is Methyltransferase fsa4, found in Fusarium sp. (strain FN080326).